A 735-amino-acid chain; its full sequence is Catalase-peroxidase (735 aa).

2 stretches are compositionally biased toward polar residues: residues 1–10 and 17–26; these read MENQNRQNAA and SVTNQSSNRT. Positions 1–30 are disordered; sequence MENQNRQNAAQCPFHGSVTNQSSNRTTNKD. Residues 100 to 223 constitute a cross-link (tryptophyl-tyrosyl-methioninium (Trp-Tyr) (with M-249)); the sequence is WHSAGTYRIG…LAAVQMGLIY (124 aa). Catalysis depends on histidine 101, which acts as the Proton acceptor. A cross-link (tryptophyl-tyrosyl-methioninium (Tyr-Met) (with W-100)) is located at residues 223–249; it reads YVNPEGPDGKPDPKAAARDIRETFRRM. Heme b is bound at residue histidine 264.

This sequence belongs to the peroxidase family. Peroxidase/catalase subfamily. In terms of assembly, homodimer or homotetramer. Requires heme b as cofactor. Formation of the three residue Trp-Tyr-Met cross-link is important for the catalase, but not the peroxidase activity of the enzyme.

The enzyme catalyses H2O2 + AH2 = A + 2 H2O. It catalyses the reaction 2 H2O2 = O2 + 2 H2O. Its function is as follows. Bifunctional enzyme with both catalase and broad-spectrum peroxidase activity. Also displays NADH oxidase, INH lyase and isonicotinoyl-NAD synthase activities. This Geobacillus stearothermophilus (Bacillus stearothermophilus) protein is Catalase-peroxidase.